A 672-amino-acid polypeptide reads, in one-letter code: Poly-beta-1,6-N-acetyl-D-glucosamine N-deacetylase (672 aa).

The first 20 residues, 1 to 20, serve as a signal peptide directing secretion; it reads MLRNGNKYLLMLVSIIMLTA. Cys21 is lipidated: N-palmitoyl cysteine. Residue Cys21 is the site of S-diacylglycerol cysteine attachment. Positions 107 to 349 constitute a NodB homology domain; that stretch reads KAVVLTFDDG…IQRVKDMQIS (243 aa).

This sequence belongs to the polysaccharide deacetylase family.

The protein localises to the cell outer membrane. Functionally, catalyzes the N-deacetylation of poly-beta-1,6-N-acetyl-D-glucosamine (PGA), a biofilm adhesin polysaccharide. N-deacetylation promotes PGA export through the PgaA porin. The polypeptide is Poly-beta-1,6-N-acetyl-D-glucosamine N-deacetylase (pgaB) (Escherichia coli O157:H7).